Consider the following 283-residue polypeptide: Putative casein kinase II subunit beta-4 (283 aa).

Disordered regions lie at residues 1-23 and 35-92; these read MYKD…EILG and LDKH…SEGD. Residues 7-16 show a composition bias toward gly residues; the sequence is GGGIMGGGGS. The segment covering 58–70 has biased composition (polar residues); the sequence is VPSTSTAKSQLHS.

Belongs to the casein kinase 2 subunit beta family. As to quaternary structure, heterotetramer of two catalytic alpha subunits and two regulatory beta subunits. Post-translationally, phosphorylated by alpha subunit.

It localises to the cytoplasm. The protein resides in the cytosol. Plays a complex role in regulating the basal catalytic activity of the alpha subunit. The tetrameric holoenzyme CK2, composed of two alpha and two beta subunits, phosphorylates the transcription factor PIF1 after an exposure to light, resulting in a proteasome-dependent degradation of PIF1 and promotion of photomorphogenesis. CK2 phosphorylates translation initiation factors. May participate in the regulation of the initiation of translation. The polypeptide is Putative casein kinase II subunit beta-4 (Arabidopsis thaliana (Mouse-ear cress)).